The primary structure comprises 105 residues: D-galactoside-specific lectin (105 aa).

An SUEL-type lectin domain is found at 13 to 103 (VCEDSSLTIS…KYLAVTYICS (91 aa)).

In terms of assembly, homodimer; disulfide-linked.

Its subcellular location is the cytoplasm. Its function is as follows. This protein binds D-galactoside. May have an important role in the activation of eggs (triggered by fertilization), or in their subsequent differentiation. The dimeric form is essential for hemagglutination activity. The chain is D-galactoside-specific lectin from Heliocidaris crassispina (Sea urchin).